The primary structure comprises 313 residues: Malate dehydrogenase (313 aa).

Residues 8 to 13 and D33 each bind NAD(+); that span reads GAGNVG. The substrate site is built by R83 and R89. NAD(+)-binding positions include N96 and 119–121; that span reads ISN. N121 and R152 together coordinate substrate. The active-site Proton acceptor is the H176.

Belongs to the LDH/MDH superfamily. MDH type 3 family.

The enzyme catalyses (S)-malate + NAD(+) = oxaloacetate + NADH + H(+). In terms of biological role, catalyzes the reversible oxidation of malate to oxaloacetate. The protein is Malate dehydrogenase of Parabacteroides distasonis (strain ATCC 8503 / DSM 20701 / CIP 104284 / JCM 5825 / NCTC 11152).